Consider the following 164-residue polypeptide: ATP synthase subunit b 2 (164 aa).

A helical membrane pass occupies residues 4–24; sequence TFWAFVGLVLFLALLVYFEVP.

This sequence belongs to the ATPase B chain family. F-type ATPases have 2 components, F(1) - the catalytic core - and F(0) - the membrane proton channel. F(1) has five subunits: alpha(3), beta(3), gamma(1), delta(1), epsilon(1). F(0) has three main subunits: a(1), b(2) and c(10-14). The alpha and beta chains form an alternating ring which encloses part of the gamma chain. F(1) is attached to F(0) by a central stalk formed by the gamma and epsilon chains, while a peripheral stalk is formed by the delta and b chains.

The protein localises to the cell inner membrane. F(1)F(0) ATP synthase produces ATP from ADP in the presence of a proton or sodium gradient. F-type ATPases consist of two structural domains, F(1) containing the extramembraneous catalytic core and F(0) containing the membrane proton channel, linked together by a central stalk and a peripheral stalk. During catalysis, ATP synthesis in the catalytic domain of F(1) is coupled via a rotary mechanism of the central stalk subunits to proton translocation. Its function is as follows. Component of the F(0) channel, it forms part of the peripheral stalk, linking F(1) to F(0). The chain is ATP synthase subunit b 2 from Bartonella henselae (strain ATCC 49882 / DSM 28221 / CCUG 30454 / Houston 1) (Rochalimaea henselae).